An 896-amino-acid polypeptide reads, in one-letter code: Probable sodium/sulfate cotransporter 3 (896 aa).

The next 5 helical transmembrane spans lie at 1–21 (MAAI…SFII), 47–69 (IITV…IFLY), 106–126 (VMVL…IPIL), 140–160 (LLIP…IGTS), and 186–206 (MFDI…FIIL). 4 RCK C-terminal domains span residues 212–296 (LPGN…EFGL), 319–404 (TAFH…FKIN), 408–493 (LRFV…FPGL), and 499–586 (EQVD…KAFV). The next 7 helical transmembrane spans lie at 602–622 (MAIG…GGLK), 626–646 (YIHL…TGCM), 654–674 (AIMW…AALE), 685–705 (AIIS…AIYV), 734–754 (LKIP…AGFI), 776–796 (FATI…FILC), and 804–824 (VWIA…LLTL). The disordered stretch occupies residues 857–881 (RAQSFGGKAMSVGSTESRTDGSSTP). Residues 868 to 881 (VGSTESRTDGSSTP) are compositionally biased toward polar residues.

This sequence belongs to the divalent anion:Na+ symporter (DASS) superfamily. Na+/sulfate symporter (TC 2.A.47.4) family.

The protein resides in the cell membrane. In terms of biological role, na(+)/sulfate cotransporter with a probable low-affinity for sulfate. The protein is Probable sodium/sulfate cotransporter 3 (SLT3) of Chlamydomonas reinhardtii (Chlamydomonas smithii).